A 175-amino-acid chain; its full sequence is Peptide deformylase (175 aa).

Residues C99 and H141 each coordinate Fe cation. The active site involves E142. H145 contributes to the Fe cation binding site.

It belongs to the polypeptide deformylase family. It depends on Fe(2+) as a cofactor.

The catalysed reaction is N-terminal N-formyl-L-methionyl-[peptide] + H2O = N-terminal L-methionyl-[peptide] + formate. Its function is as follows. Removes the formyl group from the N-terminal Met of newly synthesized proteins. Requires at least a dipeptide for an efficient rate of reaction. N-terminal L-methionine is a prerequisite for activity but the enzyme has broad specificity at other positions. The protein is Peptide deformylase of Rickettsia akari (strain Hartford).